Consider the following 975-residue polypeptide: Nesprin-3 (975 aa).

The Cytoplasmic segment spans residues 1 to 925 (MTQQPQEDFE…PCSLLQKACR (925 aa)). Spectrin repeat units lie at residues 220-325 (QDHE…RLRG) and 647-740 (REHC…QALR). The disordered stretch occupies residues 778–798 (LINPQDPIPRRQHGANPLEGH). Residues 917–975 (CSLLQKACRVALPLQLLLLLFLLLLFLLPAGEEERSCALANNFARSFALMLRYNGPPPT) form the KASH domain. Residues 926–946 (VALPLQLLLLLFLLLLFLLPA) form a helical; Anchor for type IV membrane protein membrane-spanning segment. Over 947–975 (GEEERSCALANNFARSFALMLRYNGPPPT) the chain is Perinuclear space.

It belongs to the nesprin family. As to quaternary structure, core component of LINC complexes which are composed of inner nuclear membrane SUN domain-containing proteins coupled to outer nuclear membrane KASH domain-containing nesprins. SUN and KASH domain-containing proteins seem to bind each other promiscuously; however, differentially expression of LINC complex constituents can give rise to specific assemblies. Interacts with SUN1 and SUN2; probably forming respective LINC complexes. Interacts with PLEC (via actin-binding domain). Interacts with DST. Interacts with SYNE1. Interacts (via KASH domain) with TOR1A (ATP-bound); the interaction is required for SYNE3 nuclear envelope localization. In terms of processing, the disulfid bond with SUN1 or SUN2 is required for stability of the respective LINC complex under tensile forces. Ubiquitous.

It is found in the nucleus outer membrane. The protein localises to the nucleus envelope. The protein resides in the rough endoplasmic reticulum. Functionally, as a component of the LINC (LInker of Nucleoskeleton and Cytoskeleton) complex involved in the connection between the nuclear lamina and the cytoskeleton. The nucleocytoplasmic interactions established by the LINC complex play an important role in the transmission of mechanical forces across the nuclear envelope and in nuclear movement and positioning. Probable anchoring protein which tethers the nucleus to the cytoskeleton by binding PLEC which can associate with the intermediate filament system. Plays a role in the regulation of aortic epithelial cell morphology, and is required for flow-induced centrosome polarization and directional migration in aortic endothelial cells. The sequence is that of Nesprin-3 (Syne3) from Mus musculus (Mouse).